A 192-amino-acid polypeptide reads, in one-letter code: Ion-translocating oxidoreductase complex subunit A (192 aa).

6 helical membrane-spanning segments follow: residues 5 to 25 (LLLLIGTVLVNNFVLVKFLGL), 38 to 58 (AIGMSMATTFVLTLASVLSFL), 72 to 92 (LRTMSFILVIAVVVQFTEMLV), 102 to 122 (ALGIYLPLITTNCAVLGVALL), 134 to 154 (AIYGFGAAVGFSMVLILFSAM), and 171 to 191 (AIAMITAGLMSLAFMGFAGLI).

The protein belongs to the NqrDE/RnfAE family. In terms of assembly, the complex is composed of six subunits: RnfA, RnfB, RnfC, RnfD, RnfE and RnfG.

It localises to the cell inner membrane. In terms of biological role, part of a membrane-bound complex that couples electron transfer with translocation of ions across the membrane. This is Ion-translocating oxidoreductase complex subunit A from Shewanella denitrificans (strain OS217 / ATCC BAA-1090 / DSM 15013).